Consider the following 571-residue polypeptide: Proline--tRNA ligase (571 aa).

This sequence belongs to the class-II aminoacyl-tRNA synthetase family. ProS type 1 subfamily. Homodimer.

It localises to the cytoplasm. The enzyme catalyses tRNA(Pro) + L-proline + ATP = L-prolyl-tRNA(Pro) + AMP + diphosphate. In terms of biological role, catalyzes the attachment of proline to tRNA(Pro) in a two-step reaction: proline is first activated by ATP to form Pro-AMP and then transferred to the acceptor end of tRNA(Pro). As ProRS can inadvertently accommodate and process non-cognate amino acids such as alanine and cysteine, to avoid such errors it has two additional distinct editing activities against alanine. One activity is designated as 'pretransfer' editing and involves the tRNA(Pro)-independent hydrolysis of activated Ala-AMP. The other activity is designated 'posttransfer' editing and involves deacylation of mischarged Ala-tRNA(Pro). The misacylated Cys-tRNA(Pro) is not edited by ProRS. The polypeptide is Proline--tRNA ligase (Pasteurella multocida (strain Pm70)).